The primary structure comprises 790 residues: MLVPLSLLQKFFSSPLSIEEILQACDRIGIEAECSNVFPDSLNTVVTGKILSASPHPDAERLTVAIVFDGKGERQIICGAPNCRAGIIVPIALPGAKLRNASGEITTIKKAKIRGLESQGMCCGADELGFPHLQKAERGIFEFPADTPLGESACMLLAGAPLECSLTPNLGHCASLLGLAREISFLSPVSLNIPEEFSFASLPQETSICDMHDAGACPVFYSVKISGLSCRRSPEYLQAALTALGQKPLNAIVDITNYVMLSLGQPLHAYDSQAVEQKSLHAATLQSAQPLTLLNQETYTLPAGSLVVADQHNILGLAGVMGSAASSCSENTTEIILEAAYFQPQAVRKYQRTIQLHTEAAYRFTRGVDPQGVLPVLHAAIHMIQSLFPDAQISPIQKIGDDSFSPLSLSVRPKTIKRLLDIELSTAEIVAKLSSLGFQTAVEEQAVRVEVPSYRHDIQEETDLVEEICRTTPFVQKTQKILPTYTPIYSLKRELTAFLANGGLQQFFTYSLLDTEVSSLSLQESSLIPVQNSSWKLRDSLLPGMLKSAATNLHRQAPYVYAFEIGNVYSKEQNRYQEEERVAILLSRQVMDDSWQGKTPLSFYTIKGWVEKLLCQSGASIEDFSLQPSQHPNFHPYQQAALYQKKHLLGIFGTLHPQLCRKAQIKHDVVFAELSLNVLLSLKKKSGPHYVPYPIYPASSRDITITIDRDLPADLVRRELLSFESKWLESVHIVSVYQGRDSASQSKNVSLRMVFRDHERTLSGQEIEEEYERLTALLDKKLANIGQGNS.

Residues Pro-39–Cys-154 enclose the tRNA-binding domain. Positions Phe-404 to Pro-483 constitute a B5 domain. Mg(2+) is bound by residues Asp-457, Asp-463, Glu-466, and Glu-467. In terms of domain architecture, FDX-ACB spans Pro-694–Ser-790.

This sequence belongs to the phenylalanyl-tRNA synthetase beta subunit family. Type 1 subfamily. As to quaternary structure, tetramer of two alpha and two beta subunits. It depends on Mg(2+) as a cofactor.

It is found in the cytoplasm. It catalyses the reaction tRNA(Phe) + L-phenylalanine + ATP = L-phenylalanyl-tRNA(Phe) + AMP + diphosphate + H(+). The chain is Phenylalanine--tRNA ligase beta subunit (pheT) from Chlamydia trachomatis serovar D (strain ATCC VR-885 / DSM 19411 / UW-3/Cx).